Consider the following 126-residue polypeptide: Topoisomerase I damage affected protein 8 (126 aa).

A PA14 domain is found at 1–110; it reads MTGYFLPPQT…VTTVSDDFAG (110 aa).

Belongs to the flocculin family.

The sequence is that of Topoisomerase I damage affected protein 8 (TDA8) from Saccharomyces cerevisiae (strain ATCC 204508 / S288c) (Baker's yeast).